The primary structure comprises 199 residues: Ribonuclease HII (199 aa).

Residues 10 to 199 (HLVAGVDEVG…VKRALGLASN (190 aa)) form the RNase H type-2 domain. Residues Asp-16, Glu-17, and Asp-108 each coordinate a divalent metal cation.

It belongs to the RNase HII family. The cofactor is Mn(2+). It depends on Mg(2+) as a cofactor.

The protein localises to the cytoplasm. The enzyme catalyses Endonucleolytic cleavage to 5'-phosphomonoester.. In terms of biological role, endonuclease that specifically degrades the RNA of RNA-DNA hybrids. This chain is Ribonuclease HII, found in Klebsiella pneumoniae subsp. pneumoniae (strain ATCC 700721 / MGH 78578).